Reading from the N-terminus, the 342-residue chain is Holliday junction branch migration complex subunit RuvB (342 aa).

The large ATPase domain (RuvB-L) stretch occupies residues 1–181 (MEERFLTPKD…FGMVLELEFY (181 aa)). ATP is bound by residues Leu20, Arg21, Gly62, Lys65, Thr66, Thr67, 128–130 (EDF), Arg171, Tyr181, and Arg218. Residue Thr66 coordinates Mg(2+). The small ATPAse domain (RuvB-S) stretch occupies residues 182 to 252 (TPDELKQIIK…TVEDAMKIMG (71 aa)). Residues 255 to 342 (AEGLDDMDRK…IGPLWDSTGD (88 aa)) are head domain (RuvB-H). Positions 310 and 315 each coordinate DNA.

This sequence belongs to the RuvB family. As to quaternary structure, homohexamer. Forms an RuvA(8)-RuvB(12)-Holliday junction (HJ) complex. HJ DNA is sandwiched between 2 RuvA tetramers; dsDNA enters through RuvA and exits via RuvB. An RuvB hexamer assembles on each DNA strand where it exits the tetramer. Each RuvB hexamer is contacted by two RuvA subunits (via domain III) on 2 adjacent RuvB subunits; this complex drives branch migration. In the full resolvosome a probable DNA-RuvA(4)-RuvB(12)-RuvC(2) complex forms which resolves the HJ.

The protein localises to the cytoplasm. The catalysed reaction is ATP + H2O = ADP + phosphate + H(+). Functionally, the RuvA-RuvB-RuvC complex processes Holliday junction (HJ) DNA during genetic recombination and DNA repair, while the RuvA-RuvB complex plays an important role in the rescue of blocked DNA replication forks via replication fork reversal (RFR). RuvA specifically binds to HJ cruciform DNA, conferring on it an open structure. The RuvB hexamer acts as an ATP-dependent pump, pulling dsDNA into and through the RuvAB complex. RuvB forms 2 homohexamers on either side of HJ DNA bound by 1 or 2 RuvA tetramers; 4 subunits per hexamer contact DNA at a time. Coordinated motions by a converter formed by DNA-disengaged RuvB subunits stimulates ATP hydrolysis and nucleotide exchange. Immobilization of the converter enables RuvB to convert the ATP-contained energy into a lever motion, pulling 2 nucleotides of DNA out of the RuvA tetramer per ATP hydrolyzed, thus driving DNA branch migration. The RuvB motors rotate together with the DNA substrate, which together with the progressing nucleotide cycle form the mechanistic basis for DNA recombination by continuous HJ branch migration. Branch migration allows RuvC to scan DNA until it finds its consensus sequence, where it cleaves and resolves cruciform DNA. The protein is Holliday junction branch migration complex subunit RuvB of Kosmotoga olearia (strain ATCC BAA-1733 / DSM 21960 / TBF 19.5.1).